We begin with the raw amino-acid sequence, 132 residues long: ATP synthase epsilon chain, chloroplastic (132 aa).

Belongs to the ATPase epsilon chain family. As to quaternary structure, F-type ATPases have 2 components, CF(1) - the catalytic core - and CF(0) - the membrane proton channel. CF(1) has five subunits: alpha(3), beta(3), gamma(1), delta(1), epsilon(1). CF(0) has three main subunits: a, b and c.

The protein localises to the plastid. The protein resides in the chloroplast thylakoid membrane. Produces ATP from ADP in the presence of a proton gradient across the membrane. The polypeptide is ATP synthase epsilon chain, chloroplastic (Coffea arabica (Arabian coffee)).